Consider the following 62-residue polypeptide: Large ribosomal subunit protein bL33 (62 aa).

It belongs to the bacterial ribosomal protein bL33 family.

The polypeptide is Large ribosomal subunit protein bL33 (Bacteroides thetaiotaomicron (strain ATCC 29148 / DSM 2079 / JCM 5827 / CCUG 10774 / NCTC 10582 / VPI-5482 / E50)).